A 128-amino-acid chain; its full sequence is Protein FAM229A (128 aa).

The tract at residues 1–96 (MQSSPSTLGP…VATDQNPVRP (96 aa)) is disordered.

It belongs to the FAM229 family.

This is Protein FAM229A (Fam229a) from Mus musculus (Mouse).